The chain runs to 973 residues: Valine--tRNA ligase (973 aa).

A 'HIGH' region motif is present at residues 57-67; it reads PNVTGSLHMGH. Positions 569–573 match the 'KMSKS' region motif; that stretch reads KMSKS. Lys-572 contacts ATP. A coiled-coil region spans residues 901–970; that stretch reads MAGLIDKEAE…AKILEQKIQI (70 aa).

It belongs to the class-I aminoacyl-tRNA synthetase family. ValS type 1 subfamily. In terms of assembly, monomer.

It localises to the cytoplasm. The catalysed reaction is tRNA(Val) + L-valine + ATP = L-valyl-tRNA(Val) + AMP + diphosphate. Its function is as follows. Catalyzes the attachment of valine to tRNA(Val). As ValRS can inadvertently accommodate and process structurally similar amino acids such as threonine, to avoid such errors, it has a 'posttransfer' editing activity that hydrolyzes mischarged Thr-tRNA(Val) in a tRNA-dependent manner. This is Valine--tRNA ligase from Colwellia psychrerythraea (strain 34H / ATCC BAA-681) (Vibrio psychroerythus).